We begin with the raw amino-acid sequence, 1420 residues long: ABC transporter G family member 32 (1420 aa).

The 274-residue stretch at 135–408 (LRNIHVIGGK…FSSLGFTCPD (274 aa)) folds into the ABC transporter 1 domain. 168–175 (GPPSSGKT) serves as a coordination point for ATP. An ABC transmembrane type-2 1 domain is found at 486–699 (ELLKINFAWQ…AQNAASVNEF (214 aa)). Helical transmembrane passes span 504-524 (FIYVFKFVQLLLVALITMTVF), 544-564 (LYFSMVIILFNGFTEVPMLVA), 585-605 (LPSWLLSIPTSIIESATWVAV), 623-643 (FLLYFSLHQMSLGLFRVMGSL), 648-668 (IVANTFGSFAMLVVMTLGGFI), 674-694 (IPSWWIWGYWISPLMYAQNAA), and 735-755 (IGVAALLGYTVLFNILFTLFL). In terms of domain architecture, ABC transporter 2 spans 818-1070 (LSFSNINYYV…ELIKYFESIE (253 aa)). 863 to 870 (GVSGAGKT) contributes to the ATP binding site. An ABC transmembrane type-2 2 domain is found at 1143–1357 (SQFVACLWKQ…TLYGLLVSQY (215 aa)). 7 helical membrane passes run 1162–1182 (YTAVRFFYTVVISLMLGTICW), 1202–1222 (YAAVLFIGITNATAAQPVVSI), 1235–1255 (MYSALPFAFAQVFIEFPYVLA), 1277–1297 (FLWYLFFMYFSIMYFTFYGMM), 1307–1327 (VASIIAAPFYMLWNLFSGFMI), 1334–1354 (LWWRWYYWANPVAWTLYGLLV), and 1392–1412 (VSAIMVVAFCVFFSLVFAFAI).

It belongs to the ABC transporter superfamily. ABCG family. PDR (TC 3.A.1.205) subfamily. Ubiquitous in aerial organs. Higher expression levels in young, expanding tissues than in older tissues. Detected in the epidermal layer.

It is found in the cell membrane. In terms of biological role, may be a general defense protein. Required for the formation of the cuticle layer of the cell wall. In Arabidopsis thaliana (Mouse-ear cress), this protein is ABC transporter G family member 32.